A 484-amino-acid chain; its full sequence is UDP-N-acetylmuramoyl-L-alanyl-D-glutamate--L-lysine ligase (484 aa).

UDP-N-acetyl-alpha-D-muramoyl-L-alanyl-D-glutamate is bound at residue serine 43. 119 to 125 (GTKGKTT) is an ATP binding site. UDP-N-acetyl-alpha-D-muramoyl-L-alanyl-D-glutamate-binding positions include 161–162 (TT), serine 188, and arginine 196. Lysine 230 is modified (N6-carboxylysine). The short motif at 405–408 (DDPN) is the L-lysine recognition motif element.

It belongs to the MurCDEF family. MurE subfamily. Post-translationally, carboxylation is probably crucial for Mg(2+) binding and, consequently, for the gamma-phosphate positioning of ATP.

The protein localises to the cytoplasm. The enzyme catalyses UDP-N-acetyl-alpha-D-muramoyl-L-alanyl-D-glutamate + L-lysine + ATP = UDP-N-acetyl-alpha-D-muramoyl-L-alanyl-gamma-D-glutamyl-L-lysine + ADP + phosphate + H(+). The protein operates within cell wall biogenesis; peptidoglycan biosynthesis. Functionally, catalyzes the addition of L-lysine to the nucleotide precursor UDP-N-acetylmuramoyl-L-alanyl-D-glutamate (UMAG) in the biosynthesis of bacterial cell-wall peptidoglycan. The chain is UDP-N-acetylmuramoyl-L-alanyl-D-glutamate--L-lysine ligase from Streptococcus agalactiae serotype Ia (strain ATCC 27591 / A909 / CDC SS700).